The following is a 2083-amino-acid chain: Nonribosomal peptide synthetase sidD (2083 aa).

Residues threonine 251–arginine 650 are adenylation 1. The Carrier 1 domain maps to arginine 764–aspartate 840. Serine 801 is modified (O-(pantetheine 4'-phosphoryl)serine). A condensation 1 region spans residues glutamate 876–isoleucine 1146. Positions leucine 1336–histidine 1421 are adenylation 2. Positions asparagine 1557–glutamate 1633 constitute a Carrier 2 domain. Serine 1594 carries the post-translational modification O-(pantetheine 4'-phosphoryl)serine. The segment at aspartate 1674 to phenylalanine 1946 is condensation 2.

Belongs to the NRP synthetase family.

The protein operates within siderophore biosynthesis. In terms of biological role, nonribosomal peptide synthetase; part of the siderophore biosynthetic pathway. Aspergillus fumigatus produces four types of siderophores, low-molecular-mass iron chelators, including excreted fusarinine C (FsC) and triacetylfusarinine C (TAFC) for iron uptake; and intacellular ferricrocin (FC) for hyphal and hydroxyferricrocin (HFC) for conidial iron distribution and storage. TAFC consists of three N(2)-acetyl-N(5)-anhydromevalonyl-N(5)-hydroxyornithine residues cyclically linked by ester bonds; FC is a cyclic hexapeptide with the structure Gly-Ser-Gly-(N(5)-acetyl-N(5)-hydroxyornithine)x3. The biosynthesis of all four siderophores depends on the hydroxylation of ornithine, catalyzed by the monooxygenase sidA. Subsequently, the pathways for biosynthesis of extra- and intracellular siderophores split. For biosynthesis of extracellular siderophores, the transacylase sidF transfers anhydromevalonyl to N(5)-hydroxyornithine. The required anhydromevalonyl-CoA moiety is derived from mevalonate by CoA ligation and dehydration catalyzed by sidI and sidH respectively. The acetylation of N(5)-hydroxyornithine for FC biosynthesis involves the constitutively expressed sidL. FC is hydroxylated to HFC by an as yet uncharacterized enzyme during conidiation. Assembly of fusarinine C (FsC) and FC is catalyzed by two different nonribosomal peptide synthetases (NRPS), sidD and sidC respectively. Subsequently, sidG catalyzes N2-acetylation of FsC for forming TAFC. Both extra- and intracellular siderophores are crucial for growth during iron limitation and virulence. The sequence is that of Nonribosomal peptide synthetase sidD from Aspergillus fumigatus (strain ATCC MYA-4609 / CBS 101355 / FGSC A1100 / Af293) (Neosartorya fumigata).